The following is a 125-amino-acid chain: RutC family protein STK_08110 (125 aa).

It belongs to the RutC family.

The polypeptide is RutC family protein STK_08110 (Sulfurisphaera tokodaii (strain DSM 16993 / JCM 10545 / NBRC 100140 / 7) (Sulfolobus tokodaii)).